A 1027-amino-acid polypeptide reads, in one-letter code: Translation initiation factor IF-2 (1027 aa).

Residues 31 to 433 (YVKSASSTVE…GGVRLPRGNG (403 aa)) form a disordered region. Over residues 57–68 (KKGGGDSNGRAG) the composition is skewed to gly residues. A compositionally biased stretch (pro residues) spans 110–122 (GPKPGPKPGPKAP). Low complexity predominate over residues 123–145 (APETKPFEEAPAPAAKADAPAQP). Residues 148-171 (EQPRSEQPRSEQPRSEQPRSERSG) show a composition bias toward basic and acidic residues. 2 stretches are compositionally biased toward pro residues: residues 174-188 (PGGP…PKPG) and 201-212 (PPKPQSPKPGPR). Residues 237 to 268 (PGGGQRQGGQGPGRGGPQGGRPDRQGGGGQGA) are compositionally biased toward gly residues. Residues 293-302 (GMMPPRPNPG) show a composition bias toward pro residues. The span at 311–397 (SGGGPGGGRG…GAAGAFGRPG (87 aa)) shows a compositional bias: gly residues. The segment covering 401-410 (RRGRKSKRQK) has biased composition (basic residues). In terms of domain architecture, tr-type G spans 523-695 (SRPPVVTVMG…ILLTADATLD (173 aa)). A G1 region spans residues 532 to 539 (GHVDHGKT). 532-539 (GHVDHGKT) serves as a coordination point for GTP. A G2 region spans residues 557–561 (GITQH). A G3 region spans residues 582-585 (DTPG). GTP is bound by residues 582 to 586 (DTPGH) and 636 to 639 (NKID). The segment at 636–639 (NKID) is G4. Residues 672–674 (SAR) are G5.

It belongs to the TRAFAC class translation factor GTPase superfamily. Classic translation factor GTPase family. IF-2 subfamily.

The protein resides in the cytoplasm. Its function is as follows. One of the essential components for the initiation of protein synthesis. Protects formylmethionyl-tRNA from spontaneous hydrolysis and promotes its binding to the 30S ribosomal subunits. Also involved in the hydrolysis of GTP during the formation of the 70S ribosomal complex. This is Translation initiation factor IF-2 from Saccharopolyspora erythraea (strain ATCC 11635 / DSM 40517 / JCM 4748 / NBRC 13426 / NCIMB 8594 / NRRL 2338).